The following is a 367-amino-acid chain: Probable butyrate kinase (367 aa).

It belongs to the acetokinase family.

It localises to the cytoplasm. The catalysed reaction is butanoate + ATP = butanoyl phosphate + ADP. This chain is Probable butyrate kinase, found in Bacillus anthracis (strain A0248).